Consider the following 110-residue polypeptide: Large ribosomal subunit protein uL22 (110 aa).

The protein belongs to the universal ribosomal protein uL22 family. In terms of assembly, part of the 50S ribosomal subunit.

In terms of biological role, this protein binds specifically to 23S rRNA; its binding is stimulated by other ribosomal proteins, e.g. L4, L17, and L20. It is important during the early stages of 50S assembly. It makes multiple contacts with different domains of the 23S rRNA in the assembled 50S subunit and ribosome. The globular domain of the protein is located near the polypeptide exit tunnel on the outside of the subunit, while an extended beta-hairpin is found that lines the wall of the exit tunnel in the center of the 70S ribosome. This Delftia acidovorans (strain DSM 14801 / SPH-1) protein is Large ribosomal subunit protein uL22.